We begin with the raw amino-acid sequence, 290 residues long: Glutamate racemase (290 aa).

Residues 24–25 (DS) and 56–57 (YG) each bind substrate. The active-site Proton donor/acceptor is the Cys87. 88 to 89 (NT) is a substrate binding site. Catalysis depends on Cys199, which acts as the Proton donor/acceptor. Residue 200 to 201 (TH) participates in substrate binding. Positions 271–290 (GADGASLPDPPSPRIELTTT) are disordered.

Belongs to the aspartate/glutamate racemases family.

The catalysed reaction is L-glutamate = D-glutamate. Its pathway is cell wall biogenesis; peptidoglycan biosynthesis. In terms of biological role, provides the (R)-glutamate required for cell wall biosynthesis. This Deinococcus radiodurans (strain ATCC 13939 / DSM 20539 / JCM 16871 / CCUG 27074 / LMG 4051 / NBRC 15346 / NCIMB 9279 / VKM B-1422 / R1) protein is Glutamate racemase.